The chain runs to 121 residues: Small ribosomal subunit protein uS13 (121 aa).

The interval 97 to 121 (VRGQRTRTNARTRRGARKTVAGKKK) is disordered. Over residues 100–121 (QRTRTNARTRRGARKTVAGKKK) the composition is skewed to basic residues.

Belongs to the universal ribosomal protein uS13 family. In terms of assembly, part of the 30S ribosomal subunit. Forms a loose heterodimer with protein S19. Forms two bridges to the 50S subunit in the 70S ribosome.

Located at the top of the head of the 30S subunit, it contacts several helices of the 16S rRNA. In the 70S ribosome it contacts the 23S rRNA (bridge B1a) and protein L5 of the 50S subunit (bridge B1b), connecting the 2 subunits; these bridges are implicated in subunit movement. Contacts the tRNAs in the A and P-sites. In Prochlorococcus marinus (strain MIT 9303), this protein is Small ribosomal subunit protein uS13.